Here is a 90-residue protein sequence, read N- to C-terminus: UPF0223 protein LMHCC_1569 (90 aa).

It belongs to the UPF0223 family.

The polypeptide is UPF0223 protein LMHCC_1569 (Listeria monocytogenes serotype 4a (strain HCC23)).